Here is a 608-residue protein sequence, read N- to C-terminus: Centromere DNA-binding protein complex CBF3 subunit B (608 aa).

The zn(2)-C6 fungal-type DNA-binding region spans 14 to 42; sequence CSVCTRRKVKCDRMIPCGNCRKRGQDSEC. A Phosphoserine modification is found at S575.

As to quaternary structure, component of the CBF3 copmplex, which is formed of CBF3A/CBF2, CBF3B/CEP3, CBF3C/CTF13 and CBF3D.

Its subcellular location is the nucleus. It localises to the chromosome. It is found in the centromere. Its function is as follows. Acts as a component of the centromere DNA-binding protein complex CBF3, which is essential for chromosome segregation and movement of centromeres along microtubules. CBF3 is required for the recruitment of other kinetochore complexes to CEN DNA. It plays a role in the attachment of chromosomes to the spindle and binds selectively to a highly conserved DNA sequence called CDEIII, found in centromers and in several promoters. The chain is Centromere DNA-binding protein complex CBF3 subunit B (CEP3) from Saccharomyces cerevisiae (strain ATCC 204508 / S288c) (Baker's yeast).